A 316-amino-acid polypeptide reads, in one-letter code: Putative HTH-type transcriptional regulatory protein PYRAB03670 (316 aa).

In terms of domain architecture, HTH cro/C1-type spans 131–189 (LKDLREKHGYSLSELANILGVSRKSLQRYEKGDSMVTLEVALRLEEVFDEALVKPINVL). Positions 142–161 (LSELANILGVSRKSLQRYEK) form a DNA-binding region, H-T-H motif.

This Pyrococcus abyssi (strain GE5 / Orsay) protein is Putative HTH-type transcriptional regulatory protein PYRAB03670.